Reading from the N-terminus, the 385-residue chain is Succinyl-diaminopimelate desuccinylase (385 aa).

H78 is a Zn(2+) binding site. Residue D80 is part of the active site. D110 contacts Zn(2+). Residue E144 is the Proton acceptor of the active site. Residues E145, E173, and H358 each coordinate Zn(2+).

The protein belongs to the peptidase M20A family. DapE subfamily. As to quaternary structure, homodimer. It depends on Zn(2+) as a cofactor. Co(2+) serves as cofactor.

The enzyme catalyses N-succinyl-(2S,6S)-2,6-diaminopimelate + H2O = (2S,6S)-2,6-diaminopimelate + succinate. It participates in amino-acid biosynthesis; L-lysine biosynthesis via DAP pathway; LL-2,6-diaminopimelate from (S)-tetrahydrodipicolinate (succinylase route): step 3/3. Functionally, catalyzes the hydrolysis of N-succinyl-L,L-diaminopimelic acid (SDAP), forming succinate and LL-2,6-diaminopimelate (DAP), an intermediate involved in the bacterial biosynthesis of lysine and meso-diaminopimelic acid, an essential component of bacterial cell walls. This is Succinyl-diaminopimelate desuccinylase from Gluconacetobacter diazotrophicus (strain ATCC 49037 / DSM 5601 / CCUG 37298 / CIP 103539 / LMG 7603 / PAl5).